The primary structure comprises 672 residues: Glycerophosphocholine phosphodiesterase GPCPD1 (672 aa).

The 115-residue stretch at 1–115 (MTPSQVAFEI…IIIDDGQFGI (115 aa)) folds into the CBM20 domain. Substrate contacts are provided by residues Lys-70 and 88 to 89 (HK). Residues Ser-175 and Ser-424 each carry the phosphoserine modification. In terms of domain architecture, GP-PDE spans 318 to 618 (PLDVGHRGAG…DRIYDWMPEQ (301 aa)). Tyr-608 carries the phosphotyrosine modification.

The protein belongs to the glycerophosphoryl diester phosphodiesterase family. Widely expressed, with highest expression in spinal chord.

It localises to the cytoplasm. It is found in the cytosol. It carries out the reaction sn-glycerol 3-phosphocholine + H2O = sn-glycerol 3-phosphate + choline + H(+). Its function is as follows. May be involved in the negative regulation of skeletal muscle differentiation, independently of its glycerophosphocholine phosphodiesterase activity. This Homo sapiens (Human) protein is Glycerophosphocholine phosphodiesterase GPCPD1 (GPCPD1).